We begin with the raw amino-acid sequence, 517 residues long: Ribonuclease Y (517 aa).

A helical membrane pass occupies residues 1 to 21 (MIESLIALIAAIVGLGIGYLV). A KH domain is found at 207 to 273 (LINVINIKND…TKVIELLVED (67 aa)). One can recognise an HD domain in the interval 333–426 (ALAHSLEVAH…VCAADTLSAA (94 aa)).

The protein belongs to the RNase Y family.

Its subcellular location is the cell membrane. Its function is as follows. Endoribonuclease that initiates mRNA decay. The protein is Ribonuclease Y of Campylobacter jejuni subsp. jejuni serotype O:6 (strain 81116 / NCTC 11828).